Consider the following 155-residue polypeptide: Transcriptional regulator MraZ (155 aa).

SpoVT-AbrB domains are found at residues 7-54 (TYEC…PMEE) and 83-126 (VKTV…DKDK).

Belongs to the MraZ family. In terms of assembly, forms oligomers.

Its subcellular location is the cytoplasm. The protein localises to the nucleoid. The polypeptide is Transcriptional regulator MraZ (Christiangramia forsetii (strain DSM 17595 / CGMCC 1.15422 / KT0803) (Gramella forsetii)).